Reading from the N-terminus, the 457-residue chain is Argininosuccinate lyase (457 aa).

This sequence belongs to the lyase 1 family. Argininosuccinate lyase subfamily.

The protein localises to the cytoplasm. It carries out the reaction 2-(N(omega)-L-arginino)succinate = fumarate + L-arginine. Its pathway is amino-acid biosynthesis; L-arginine biosynthesis; L-arginine from L-ornithine and carbamoyl phosphate: step 3/3. This is Argininosuccinate lyase from Staphylococcus carnosus (strain TM300).